Here is a 142-residue protein sequence, read N- to C-terminus: Large ribosomal subunit protein uL13 (142 aa).

It belongs to the universal ribosomal protein uL13 family. Part of the 50S ribosomal subunit.

In terms of biological role, this protein is one of the early assembly proteins of the 50S ribosomal subunit, although it is not seen to bind rRNA by itself. It is important during the early stages of 50S assembly. The protein is Large ribosomal subunit protein uL13 of Photorhabdus laumondii subsp. laumondii (strain DSM 15139 / CIP 105565 / TT01) (Photorhabdus luminescens subsp. laumondii).